A 137-amino-acid chain; its full sequence is Sec-independent protein translocase protein TatB (137 aa).

A helical membrane pass occupies residues 2–22 (FANIGWGEMLILVIAGLVILG). The disordered stretch occupies residues 92–137 (FFTGKFDQQNGKPAAGQEKPVTPVNPPVTATPPSESTATPFDSDAT). Residues 122 to 131 (TPPSESTATP) are compositionally biased toward low complexity.

This sequence belongs to the TatB family. In terms of assembly, the Tat system comprises two distinct complexes: a TatABC complex, containing multiple copies of TatA, TatB and TatC subunits, and a separate TatA complex, containing only TatA subunits. Substrates initially bind to the TatABC complex, which probably triggers association of the separate TatA complex to form the active translocon.

The protein localises to the cell membrane. Its function is as follows. Part of the twin-arginine translocation (Tat) system that transports large folded proteins containing a characteristic twin-arginine motif in their signal peptide across membranes. Together with TatC, TatB is part of a receptor directly interacting with Tat signal peptides. TatB may form an oligomeric binding site that transiently accommodates folded Tat precursor proteins before their translocation. The sequence is that of Sec-independent protein translocase protein TatB from Mycobacterium sp. (strain JLS).